We begin with the raw amino-acid sequence, 407 residues long: Biflaviolin synthase CYP158A1 (407 aa).

The segment covering 1–11 has biased composition (polar residues); it reads MTQETTTLTGQ. The disordered stretch occupies residues 1-20; that stretch reads MTQETTTLTGQSPPPVRDWP. Flaviolin is bound by residues Arg-92, Tyr-199, and 290 to 291; that span reads HR. Residue Cys-356 participates in heme binding.

This sequence belongs to the cytochrome P450 family. Heme serves as cofactor.

It carries out the reaction 2 flaviolin + 2 reduced [2Fe-2S]-[ferredoxin] + O2 + H(+) = 3,3'-biflaviolin + 2 oxidized [2Fe-2S]-[ferredoxin] + 2 H2O. The enzyme catalyses 2 flaviolin + 2 reduced [2Fe-2S]-[ferredoxin] + O2 + H(+) = 3,8'-biflaviolin + 2 oxidized [2Fe-2S]-[ferredoxin] + 2 H2O. The protein operates within pigment biosynthesis. Its function is as follows. Catalyzes oxidative C-C coupling reaction to polymerize flaviolin and form highly conjugated pigments which protect the soil bacterium from deleterious effects of UV irradiation (two isomers of biflaviolin and one triflaviolin). The sequence is that of Biflaviolin synthase CYP158A1 from Streptomyces coelicolor (strain ATCC BAA-471 / A3(2) / M145).